The primary structure comprises 111 residues: ATP synthase subunit c (111 aa).

A run of 2 helical transmembrane segments spans residues 38–58 (GLGVVAVGAGLAMIGAIGSGL) and 89–109 (AGIAETASIYSFIVALLLIFV).

It belongs to the ATPase C chain family. In terms of assembly, F-type ATPases have 2 components, F(1) - the catalytic core - and F(0) - the membrane proton channel. F(1) has five subunits: alpha(3), beta(3), gamma(1), delta(1), epsilon(1). F(0) has three main subunits: a(1), b(2) and c(10-14). The alpha and beta chains form an alternating ring which encloses part of the gamma chain. F(1) is attached to F(0) by a central stalk formed by the gamma and epsilon chains, while a peripheral stalk is formed by the delta and b chains.

It is found in the cell membrane. F(1)F(0) ATP synthase produces ATP from ADP in the presence of a proton or sodium gradient. F-type ATPases consist of two structural domains, F(1) containing the extramembraneous catalytic core and F(0) containing the membrane proton channel, linked together by a central stalk and a peripheral stalk. During catalysis, ATP synthesis in the catalytic domain of F(1) is coupled via a rotary mechanism of the central stalk subunits to proton translocation. In terms of biological role, key component of the F(0) channel; it plays a direct role in translocation across the membrane. A homomeric c-ring of between 10-14 subunits forms the central stalk rotor element with the F(1) delta and epsilon subunits. This chain is ATP synthase subunit c, found in Mycoplasmopsis synoviae (strain 53) (Mycoplasma synoviae).